The following is a 317-amino-acid chain: uncharacterized protein (317 aa).

The first 16 residues, 1 to 16 (MKLSFILSTLVAGALA), serve as a signal peptide directing secretion. A glycan (N-linked (GlcNAc...) asparagine) is linked at asparagine 42. Low complexity-rich tracts occupy residues 150–238 (SSST…SSSS) and 247–259 (TASTDDSSSASSA). Positions 150–259 (SSSTPSSSSS…TDDSSSASSA (110 aa)) are disordered.

This is an uncharacterized protein from Schizosaccharomyces pombe (strain 972 / ATCC 24843) (Fission yeast).